A 201-amino-acid polypeptide reads, in one-letter code: 3-isopropylmalate dehydratase small subunit (201 aa).

This sequence belongs to the LeuD family. LeuD type 1 subfamily. In terms of assembly, heterodimer of LeuC and LeuD.

It catalyses the reaction (2R,3S)-3-isopropylmalate = (2S)-2-isopropylmalate. Its pathway is amino-acid biosynthesis; L-leucine biosynthesis; L-leucine from 3-methyl-2-oxobutanoate: step 2/4. Functionally, catalyzes the isomerization between 2-isopropylmalate and 3-isopropylmalate, via the formation of 2-isopropylmaleate. The polypeptide is 3-isopropylmalate dehydratase small subunit (Chloroflexus aurantiacus (strain ATCC 29366 / DSM 635 / J-10-fl)).